The sequence spans 168 residues: Cell division inhibitor SulA (168 aa).

A ftsZ binding region spans residues 105–111 (ALETGNY). Positions 161 to 168 (RIHSRMVH) are lon protease binding.

Belongs to the SulA family. Interacts with FtsZ. In terms of processing, is rapidly cleaved and degraded by the Lon protease once DNA damage is repaired.

In terms of biological role, component of the SOS system and an inhibitor of cell division. Accumulation of SulA causes rapid cessation of cell division and the appearance of long, non-septate filaments. In the presence of GTP, binds a polymerization-competent form of FtsZ in a 1:1 ratio, thus inhibiting FtsZ polymerization and therefore preventing it from participating in the assembly of the Z ring. This mechanism prevents the premature segregation of damaged DNA to daughter cells during cell division. This Cronobacter turicensis (strain DSM 18703 / CCUG 55852 / LMG 23827 / z3032) protein is Cell division inhibitor SulA.